The chain runs to 340 residues: Glycerol-3-phosphate dehydrogenase [NAD(P)+] (340 aa).

Positions 11, 12, 33, and 106 each coordinate NADPH. Sn-glycerol 3-phosphate contacts are provided by lysine 106, glycine 137, and serine 139. Alanine 141 is a binding site for NADPH. Lysine 192, aspartate 245, serine 255, arginine 256, and asparagine 257 together coordinate sn-glycerol 3-phosphate. Lysine 192 acts as the Proton acceptor in catalysis. Arginine 256 provides a ligand contact to NADPH. Residues valine 280 and glutamate 282 each coordinate NADPH.

Belongs to the NAD-dependent glycerol-3-phosphate dehydrogenase family.

It is found in the cytoplasm. The catalysed reaction is sn-glycerol 3-phosphate + NAD(+) = dihydroxyacetone phosphate + NADH + H(+). It carries out the reaction sn-glycerol 3-phosphate + NADP(+) = dihydroxyacetone phosphate + NADPH + H(+). It functions in the pathway membrane lipid metabolism; glycerophospholipid metabolism. Functionally, catalyzes the reduction of the glycolytic intermediate dihydroxyacetone phosphate (DHAP) to sn-glycerol 3-phosphate (G3P), the key precursor for phospholipid synthesis. This chain is Glycerol-3-phosphate dehydrogenase [NAD(P)+], found in Bacillus cereus (strain ATCC 10987 / NRS 248).